The sequence spans 505 residues: Cytochrome P450 2K6 (505 aa).

The chain crosses the membrane as a helical span at residues 7–27; it reads FLLQGSPTGTILGALLLFLVI. Cysteine 448 contributes to the heme binding site.

Belongs to the cytochrome P450 family. Heme serves as cofactor. In terms of tissue distribution, detected in liver and ovary.

It localises to the endoplasmic reticulum membrane. The protein localises to the microsome membrane. In terms of biological role, metabolizes aflatoxin B1 (AFB1) to the cytotoxic derivative AFB1 exo-8,9-epoxide. Does not show activity towards lauric acid. The protein is Cytochrome P450 2K6 of Danio rerio (Zebrafish).